Reading from the N-terminus, the 89-residue chain is Small ribosomal subunit protein uS15 (89 aa).

It belongs to the universal ribosomal protein uS15 family. As to quaternary structure, part of the 30S ribosomal subunit. Forms a bridge to the 50S subunit in the 70S ribosome, contacting the 23S rRNA.

In terms of biological role, one of the primary rRNA binding proteins, it binds directly to 16S rRNA where it helps nucleate assembly of the platform of the 30S subunit by binding and bridging several RNA helices of the 16S rRNA. Functionally, forms an intersubunit bridge (bridge B4) with the 23S rRNA of the 50S subunit in the ribosome. The protein is Small ribosomal subunit protein uS15 of Pseudomonas savastanoi pv. phaseolicola (strain 1448A / Race 6) (Pseudomonas syringae pv. phaseolicola (strain 1448A / Race 6)).